The sequence spans 314 residues: Lipoyl synthase (314 aa).

[4Fe-4S] cluster is bound by residues Cys40, Cys45, Cys51, Cys67, Cys71, Cys74, and Ser280. The 217-residue stretch at 53 to 269 folds into the Radical SAM core domain; that stretch reads SERKTATFMI…KNIALEKGFS (217 aa).

Belongs to the radical SAM superfamily. Lipoyl synthase family. The cofactor is [4Fe-4S] cluster.

Its subcellular location is the cytoplasm. The catalysed reaction is [[Fe-S] cluster scaffold protein carrying a second [4Fe-4S](2+) cluster] + N(6)-octanoyl-L-lysyl-[protein] + 2 oxidized [2Fe-2S]-[ferredoxin] + 2 S-adenosyl-L-methionine + 4 H(+) = [[Fe-S] cluster scaffold protein] + N(6)-[(R)-dihydrolipoyl]-L-lysyl-[protein] + 4 Fe(3+) + 2 hydrogen sulfide + 2 5'-deoxyadenosine + 2 L-methionine + 2 reduced [2Fe-2S]-[ferredoxin]. The protein operates within protein modification; protein lipoylation via endogenous pathway; protein N(6)-(lipoyl)lysine from octanoyl-[acyl-carrier-protein]. Functionally, catalyzes the radical-mediated insertion of two sulfur atoms into the C-6 and C-8 positions of the octanoyl moiety bound to the lipoyl domains of lipoate-dependent enzymes, thereby converting the octanoylated domains into lipoylated derivatives. The polypeptide is Lipoyl synthase (Oceanobacillus iheyensis (strain DSM 14371 / CIP 107618 / JCM 11309 / KCTC 3954 / HTE831)).